Here is a 632-residue protein sequence, read N- to C-terminus: Arginyl-tRNA--protein transferase 1 (632 aa).

Over residues 1–18 (MSLKNDASSSHDGGSNRE) the composition is skewed to polar residues. Disordered stretches follow at residues 1–27 (MSLK…HGRR), 113–144 (KLDV…AKSE), 284–312 (NGNI…HQAR), and 517–580 (PAAS…NDIN). Residues 113-122 (KLDVQPREQR) are compositionally biased toward basic and acidic residues. Residues 285–296 (GNISRGANSLDG) show a composition bias toward polar residues. Basic and acidic residues predominate over residues 298-310 (ETLHAKKDSENHQ). Acidic residues predominate over residues 538–563 (SDEDEDEDEDDDDDDDDDEEMYETES). The segment covering 564 to 578 (EDSHIESDPGSKDND) has biased composition (basic and acidic residues).

It belongs to the R-transferase family.

It catalyses the reaction an N-terminal L-alpha-aminoacyl-[protein] + L-arginyl-tRNA(Arg) = an N-terminal L-arginyl-L-aminoacyl-[protein] + tRNA(Arg) + H(+). Involved in the post-translational conjugation of arginine to the N-terminal aspartate or glutamate of a protein. This arginylation is required for degradation of the protein via the ubiquitin pathway. Component of the N-end rule pathway with ATE2 and PRT6. The N-end rule pathway regulates seed after-ripening, seedling sugar sensitivity, seedling lipid breakdown, and abscisic acid (ABA) sensitivity of germination. The end-rule pathway regulates various aspects of leaf and shoot development. Involved in the oxygen-dependent N-arginylation of RAP2-12, an activator of hypoxic gene expression. This N-terminal modification leads to ubiquitination by PRT6 and subsequent degradation of RAP2-12 under aerobic conditions. Has an important role in the progression of leaf senescence. Involved in disease resistance. The end-rule pathway plays a role in regulating the timing and amplitude of the immune response following infection with the bacterial pathogen Pseudomonas syringae pv tomato. Regulates the biosynthesis of plant-defense metabolites such as glucosinolates, and the biosynthesis and response to the phytohormone jasmonate (JA), which plays a key role in plant immunity. The polypeptide is Arginyl-tRNA--protein transferase 1 (Arabidopsis thaliana (Mouse-ear cress)).